The primary structure comprises 40 residues: Trypsin inhibitor (40 aa).

Monomer.

It catalyses the reaction Preferential cleavage: Arg-|-Xaa, Lys-|-Xaa.. Functionally, inhibits trypsin but not chymotrypsin, papain or porcine pancreatic alpha-amylase. Has insecticidal activity against A.aegypti. Functions by inhibiting the A.aegypti midgut proteases to reduce the survival of larva and adults. The chain is Trypsin inhibitor from Cassia leiandra (Marimari).